The chain runs to 398 residues: Acetate kinase (398 aa).

A Mg(2+)-binding site is contributed by asparagine 7. Lysine 14 lines the ATP pocket. Arginine 92 is a binding site for substrate. Aspartate 149 acts as the Proton donor/acceptor in catalysis. ATP-binding positions include 208–212 (HLGNG), 283–285 (DCR), and 331–335 (GIGEN). Residue glutamate 385 participates in Mg(2+) binding.

It belongs to the acetokinase family. In terms of assembly, homodimer. Mg(2+) is required as a cofactor. Mn(2+) serves as cofactor.

It is found in the cytoplasm. The enzyme catalyses acetate + ATP = acetyl phosphate + ADP. It participates in metabolic intermediate biosynthesis; acetyl-CoA biosynthesis; acetyl-CoA from acetate: step 1/2. Its function is as follows. Catalyzes the formation of acetyl phosphate from acetate and ATP. Can also catalyze the reverse reaction. This is Acetate kinase from Fusobacterium nucleatum subsp. nucleatum (strain ATCC 25586 / DSM 15643 / BCRC 10681 / CIP 101130 / JCM 8532 / KCTC 2640 / LMG 13131 / VPI 4355).